Here is an 82-residue protein sequence, read N- to C-terminus: MAKISCSYFLVLMLVFSVFSLVEKTKGKRHCSTIILPESPCVPQDCVEYCFEEYNGGGTCIASKTGRTTNCMCTYNCHGNNL.

The signal sequence occupies residues 1 to 27; sequence MAKISCSYFLVLMLVFSVFSLVEKTKG. 4 cysteine pairs are disulfide-bonded: Cys-31–Cys-77, Cys-41–Cys-60, Cys-46–Cys-71, and Cys-50–Cys-73.

The protein belongs to the DEFL family. As to expression, expressed in flower buds, but not in stems, roots or rosette leaves.

It localises to the secreted. The polypeptide is Defensin-like protein 156 (LCR21) (Arabidopsis thaliana (Mouse-ear cress)).